The primary structure comprises 257 residues: Dihydroorotate dehydrogenase B (NAD(+)), electron transfer subunit (257 aa).

The FAD-binding FR-type domain maps to 2 to 101 (IRQEKMRVVS…LGPIGNGFPV (100 aa)). Residues 52–55 (RPIS), 69–71 (IYR), and 76–77 (GT) contribute to the FAD site. C220, C225, C228, and C244 together coordinate [2Fe-2S] cluster.

It belongs to the PyrK family. Heterotetramer of 2 PyrK and 2 PyrD type B subunits. [2Fe-2S] cluster is required as a cofactor. It depends on FAD as a cofactor.

Its pathway is pyrimidine metabolism; UMP biosynthesis via de novo pathway; orotate from (S)-dihydroorotate (NAD(+) route): step 1/1. In terms of biological role, responsible for channeling the electrons from the oxidation of dihydroorotate from the FMN redox center in the PyrD type B subunit to the ultimate electron acceptor NAD(+). The protein is Dihydroorotate dehydrogenase B (NAD(+)), electron transfer subunit of Lysinibacillus sphaericus (strain C3-41).